Reading from the N-terminus, the 143-residue chain is Transcriptional regulator MraZ (143 aa).

2 consecutive SpoVT-AbrB domains span residues 5–47 (EYLH…PLDE) and 76–119 (ATEC…SQAL).

Belongs to the MraZ family. In terms of assembly, forms oligomers.

It is found in the cytoplasm. The protein localises to the nucleoid. The protein is Transcriptional regulator MraZ of Desulfitobacterium hafniense (strain DSM 10664 / DCB-2).